The primary structure comprises 411 residues: cAMP-dependent protein kinase regulatory subunit (411 aa).

Residues 1 to 144 (MAESAFPSAQ…SWTPPYHEKT (144 aa)) form a disordered region. The tract at residues 23–159 (AAFQKISEED…RLKTAVSSNF (137 aa)) is dimerization and phosphorylation. Over residues 46 to 58 (SANAAAASSSTGS) the composition is skewed to low complexity. Residues 85-96 (EEDEEGADEFPP) show a composition bias toward acidic residues. Positions 119-136 (TSVSAESLNPTSAGSDSW) are enriched in polar residues. Phosphoserine is present on serine 120. 3',5'-cyclic AMP contacts are provided by residues 160-289 (LFSH…FLEE), glutamate 238, arginine 247, 292-411 (LLSS…PVPA), glutamate 359, and arginine 368.

This sequence belongs to the cAMP-dependent kinase regulatory chain family. In terms of assembly, tetramer, composed of 2 regulatory (R) and 2 catalytic (C) subunits. In the presence of cAMP it dissociates into 2 active monomeric C subunits and an R dimer.

This Aspergillus niger protein is cAMP-dependent protein kinase regulatory subunit (pkaR).